Consider the following 334-residue polypeptide: DNA polymerase III subunit delta' (334 aa).

In terms of assembly, the DNA polymerase III holoenzyme complex contains at least 10 different subunits organized into 3 functionally essential subassemblies: the Pol III core, the beta sliding clamp processivity factor and the clamp-loading complex. The Pol III core (subunits alpha, epsilon and theta) contains the polymerase and the 3'-5' exonuclease proofreading activities. The polymerase is tethered to the template via the dimeric beta sliding clamp processivity factor. The clamp-loading complex (also called gamma complex) assembles the beta sliding clamp onto the primed template and plays a central role in the organization and communication at the replication fork. The clamp-loading complex contains delta, delta', psi and chi, and 3 copies of either or both of two different DnaX proteins, gamma and tau. The DNA replisome complex has a single clamp loader (3 tau and 1 each of delta, delta', psi and chi subunits) which binds 3 Pol III cores (1 core on the leading strand and 2 on the lagging strand) each with a beta sliding clamp dimer. Additional proteins in the replisome are other copies of gamma, psi and chi, Ssb, DNA helicase and RNA primase. The clamp loader hydrolyzes ATP to assemble the beta processivity factor onto the primed template and plays a central role in the organization and communication at the replication fork; the minimal complex to load the beta sliding clamp on DNA is delta, delta', gamma.

It carries out the reaction DNA(n) + a 2'-deoxyribonucleoside 5'-triphosphate = DNA(n+1) + diphosphate. In terms of biological role, part of the beta sliding clamp loading complex, which hydrolyzes ATP to load the beta clamp onto primed DNA to form the DNA replication pre-initiation complex. DNA polymerase III is a complex, multichain enzyme responsible for most of the replicative synthesis in bacteria. This DNA polymerase also exhibits 3' to 5' exonuclease activity. The gamma complex (gamma(3),delta,delta') is thought to load beta dimers onto DNA by binding ATP which alters the complex's conformation so it can bind beta sliding clamp dimers and open them at one interface. Primed DNA is recognized, ATP is hydrolyzed releasing the gamma complex and closing the beta sliding clamp ring around the primed DNA. This Escherichia coli (strain K12) protein is DNA polymerase III subunit delta' (holB).